Reading from the N-terminus, the 763-residue chain is uncharacterized protein (763 aa).

A TR mART core domain is found at 380-607 (DSVLNPFNTN…YNIKVITMRL (228 aa)). A helical membrane pass occupies residues 684–700 (SYVSIYALLCPLLTNIY).

The protein localises to the membrane. This is an uncharacterized protein from Acanthamoeba polyphaga mimivirus (APMV).